The sequence spans 408 residues: Arginine biosynthesis bifunctional protein ArgJ (408 aa).

Thr-162, Lys-188, Thr-199, Glu-280, Asn-403, and Ser-408 together coordinate substrate. The active-site Nucleophile is the Thr-199.

This sequence belongs to the ArgJ family. In terms of assembly, heterotetramer of two alpha and two beta chains.

Its subcellular location is the cytoplasm. The catalysed reaction is N(2)-acetyl-L-ornithine + L-glutamate = N-acetyl-L-glutamate + L-ornithine. It catalyses the reaction L-glutamate + acetyl-CoA = N-acetyl-L-glutamate + CoA + H(+). The protein operates within amino-acid biosynthesis; L-arginine biosynthesis; L-ornithine and N-acetyl-L-glutamate from L-glutamate and N(2)-acetyl-L-ornithine (cyclic): step 1/1. Its pathway is amino-acid biosynthesis; L-arginine biosynthesis; N(2)-acetyl-L-ornithine from L-glutamate: step 1/4. Catalyzes two activities which are involved in the cyclic version of arginine biosynthesis: the synthesis of N-acetylglutamate from glutamate and acetyl-CoA as the acetyl donor, and of ornithine by transacetylation between N(2)-acetylornithine and glutamate. The polypeptide is Arginine biosynthesis bifunctional protein ArgJ (Ruegeria pomeroyi (strain ATCC 700808 / DSM 15171 / DSS-3) (Silicibacter pomeroyi)).